We begin with the raw amino-acid sequence, 442 residues long: MAAHATSEPAVNLPATQFESQVTEPFGVTLLVRHLPDGIPHDIVSRLFSQYGASAVRPCSGGKLRNAAFVDFKNEAFASQAHRQLNGLRFLGKVLQVQRANKPNDNKKSRQIEESVTKGNAFSTVSTNNDSKSGQILSGEPIAPKLGIDYPFPPHLQYAYPPPDANILANITNALIAVPPLYTQVLHLMNKMNLPPPFRLALPTPPLPKAGPQQTDLEHQSSSESEMESDEDIGTSKSGRKRARHGFLVGLGMDKDVPHETVGVKPSSLTPKEIPRIRKNKHVMQIKITSKVTQDEYKEESENEDPADEPKEKDSNLKPFASLEELEKGRLPPQDILSLPMFKNYTAGNPSVVLYIKNLAKDVVIDDFYYIFGSQFESSEVAKSSLGVRLMQEGRMRGQAFLTFPSVEVAHRALNLVNGFVFKGKPMIIQFGRTPGAAKPNE.

The region spanning 28 to 102 (VTLLVRHLPD…KVLQVQRANK (75 aa)) is the RRM 1 domain. Disordered stretches follow at residues 101–138 (NKPNDNKKSRQIEESVTKGNAFSTVSTNNDSKSGQILS), 200–242 (LALP…GRKR), and 290–317 (SKVTQDEYKEESENEDPADEPKEKDSNL). Positions 102-116 (KPNDNKKSRQIEESV) are enriched in basic and acidic residues. The span at 117–136 (TKGNAFSTVSTNNDSKSGQI) shows a compositional bias: polar residues. Residues 200-209 (LALPTPPLPK) are compositionally biased toward pro residues. A compositionally biased stretch (acidic residues) spans 297–307 (YKEESENEDPA). The 83-residue stretch at 352–434 (VVLYIKNLAK…KPMIIQFGRT (83 aa)) folds into the RRM 2 domain.

Component of the U11/U12 snRNPs that are part of the U12-type spliceosome. Forms a complex with U12 snRNA. As to expression, ubiquitous.

The protein localises to the nucleus. Its function is as follows. Component of minor spliceosome required for U12-type intron splicing and alternative splicing of many introns. Binds specifically to U12 snRNA, which is necessary for branch-point site recognition. Required for normal plant development. This Arabidopsis thaliana (Mouse-ear cress) protein is U11/U12 small nuclear ribonucleoprotein 65 kDa protein (SNRNP65).